The sequence spans 340 residues: ATP synthase subunit a (340 aa).

A signal peptide spans 1 to 32 (MKRVNVIQAKAFLKVIALLVPLLLNANGPAFA). The next 6 helical transmembrane spans lie at 107-127 (HVVM…LVGS), 172-192 (LLTV…PYGA), 197-217 (NINV…VAAL), 236-256 (ALWI…PVAL), 269-289 (IVIL…VAVV), and 296-316 (IFIY…FTML).

This sequence belongs to the ATPase A chain family. F-type ATPases have 2 components, CF(1) - the catalytic core - and CF(0) - the membrane proton channel. CF(1) has five subunits: alpha(3), beta(3), gamma(1), delta(1), epsilon(1). CF(0) has four main subunits: a, b, b' and c.

The protein resides in the cell inner membrane. Functionally, key component of the proton channel; it plays a direct role in the translocation of protons across the membrane. The polypeptide is ATP synthase subunit a (Pelodictyon phaeoclathratiforme (strain DSM 5477 / BU-1)).